A 125-amino-acid polypeptide reads, in one-letter code: DCSSGWTAYGKHCYKVFDEPKTWEDAEKFCSEQANGGHLVSFRSSKEADFVVTLTAQTKESEIVWMGLSKIWNQCDWGWTNGAKLNYEAWAEAESYCVWFSSTNKEWKSRPCSLFGHFVCKSPAW.

The C-type lectin domain occupies 1–122 (DCSSGWTAYG…SLFGHFVCKS (122 aa)). 3 disulfide bridges follow: cysteine 2–cysteine 13, cysteine 30–cysteine 120, and cysteine 97–cysteine 112. Positions 41 and 47 each coordinate Ca(2+).

Belongs to the snaclec family. As to quaternary structure, heterodimer of subunits A and B; disulfide-linked. Expressed by the venom gland.

The protein resides in the secreted. Functionally, anticoagulant protein which binds to coagulation factor IX (F9) and coagulation factor X (F10) in the presence of calcium. It may bind the gamma-carboxyglutamic acid-domain regions of factors with a 1 to 1 stoichiometry. The dissociation constant (K(d)) are 6.6 nM for factor IX (F9) and 125 nM for factor X (F10). Does not bind carbohydrates. The chain is Snaclec coagulation factor IX/factor X-binding protein subunit B from Echis carinatus (Saw-scaled viper).